A 466-amino-acid chain; its full sequence is uncharacterized protein (466 aa).

The protein belongs to the myoviridae tail sheath protein family.

This is an uncharacterized protein from Bacillus subtilis (strain 168).